Consider the following 143-residue polypeptide: MGIRFILMVNKQGQTRLAQYYEWLTLEERRALEGEIVRKCLARNDQQCSFVEHRNYKIVYRRYASLFFMVGVDDDENELAILEFIHLLVETMDKHFGNVCELDIMFHLEKAHFMLEEMVMNGCIVETSKANILSPIQLMDKAH.

Belongs to the adaptor complexes small subunit family. As to quaternary structure, adaptor protein complex 4 (AP-4) is a heterotetramer composed of two large adaptins (epsilon-type subunit and beta-type subunit), a medium adaptin (mu-type subunit) and a small adaptin (sigma-type subunit). Interacts with EHD2.

The protein localises to the golgi apparatus. It localises to the trans-Golgi network. The protein resides in the membrane. It is found in the coated pit. Its function is as follows. Subunit of novel type of clathrin- or non-clathrin-associated protein coat involved in targeting proteins from the trans-Golgi network (TGN) to the endosomal-lysosomal system. The protein is AP-4 complex subunit sigma of Arabidopsis thaliana (Mouse-ear cress).